A 585-amino-acid chain; its full sequence is Urease subunit alpha (585 aa).

Residues 132–585 form the Urease domain; sequence GGIDTHIHFI…LPMAQRYFLF (454 aa). H137, H139, and K220 together coordinate Ni(2+). N6-carboxylysine is present on K220. H222 contacts substrate. The Ni(2+) site is built by H249 and H275. H323 (proton donor) is an active-site residue. D363 provides a ligand contact to Ni(2+).

This sequence belongs to the metallo-dependent hydrolases superfamily. Urease alpha subunit family. As to quaternary structure, heterotrimer of UreA (gamma), UreB (beta) and UreC (alpha) subunits. Three heterotrimers associate to form the active enzyme. Ni cation serves as cofactor. In terms of processing, carboxylation allows a single lysine to coordinate two nickel ions.

The protein resides in the cytoplasm. It catalyses the reaction urea + 2 H2O + H(+) = hydrogencarbonate + 2 NH4(+). It functions in the pathway nitrogen metabolism; urea degradation; CO(2) and NH(3) from urea (urease route): step 1/1. This chain is Urease subunit alpha, found in Pseudarthrobacter chlorophenolicus (strain ATCC 700700 / DSM 12829 / CIP 107037 / JCM 12360 / KCTC 9906 / NCIMB 13794 / A6) (Arthrobacter chlorophenolicus).